The primary structure comprises 320 residues: MDQSNYSSLHGFILLGFSNHPKMEMILSGVVAIFYLITLVGNTAIILASLLDSQLHTPMYFFLRNLSFLDLCFTTSIIPQMLVNLWGPDKTISYVGCIIQLYVYMWLGSVECLLLAVMSYDRFTAICKPLHYFVVMNPHLCLKMIIMIWSISLANSVVLCTLTLNLPTCGNNILDHFLCELPALVKIACVDTTTVEMSVFALGIIIVLTPLILILISYGYIAKAVLRTKSKASQRKAMNTCGSHLTVVSMFYGTIIYMYLQPGNRASKDQGKFLTLFYTVITPSLNPLIYTLRNKDMKDALKKLMRFHHKSTKIKRNCKS.

Over 1–25 (MDQSNYSSLHGFILLGFSNHPKMEM) the chain is Extracellular. Asparagine 5 carries an N-linked (GlcNAc...) asparagine glycan. Residues 26–49 (ILSGVVAIFYLITLVGNTAIILAS) traverse the membrane as a helical segment. At 50–57 (LLDSQLHT) the chain is on the cytoplasmic side. The chain crosses the membrane as a helical span at residues 58–79 (PMYFFLRNLSFLDLCFTTSIIP). Residues 80–100 (QMLVNLWGPDKTISYVGCIIQ) lie on the Extracellular side of the membrane. Residues cysteine 97 and cysteine 189 are joined by a disulfide bond. Residues 101-120 (LYVYMWLGSVECLLLAVMSY) traverse the membrane as a helical segment. At 121 to 139 (DRFTAICKPLHYFVVMNPH) the chain is on the cytoplasmic side. The chain crosses the membrane as a helical span at residues 140–158 (LCLKMIIMIWSISLANSVV). Residues 159-195 (LCTLTLNLPTCGNNILDHFLCELPALVKIACVDTTTV) are Extracellular-facing. A helical transmembrane segment spans residues 196-219 (EMSVFALGIIIVLTPLILILISYG). Over 220–236 (YIAKAVLRTKSKASQRK) the chain is Cytoplasmic. The chain crosses the membrane as a helical span at residues 237–259 (AMNTCGSHLTVVSMFYGTIIYMY). At 260–272 (LQPGNRASKDQGK) the chain is on the extracellular side. A helical membrane pass occupies residues 273-292 (FLTLFYTVITPSLNPLIYTL). The Cytoplasmic segment spans residues 293-320 (RNKDMKDALKKLMRFHHKSTKIKRNCKS).

Belongs to the G-protein coupled receptor 1 family.

It is found in the cell membrane. Functionally, odorant receptor. This Homo sapiens (Human) protein is Olfactory receptor 2W1 (OR2W1).